The primary structure comprises 199 residues: NAD(P)H dehydrogenase (quinone) (199 aa).

Residues 4–190 (MLVLYYSAYG…DGARFQGRRV (187 aa)) enclose the Flavodoxin-like domain. FMN contacts are provided by residues 10–15 (SAYGHM) and 78–80 (TRY). Residue Tyr12 participates in NAD(+) binding. Position 98 (Trp98) interacts with substrate. Residues 113 to 119 (STATQYG) and His134 contribute to the FMN site. The disordered stretch occupies residues 162 to 181 (GMTTTADGDGSRQPSAQELD). A compositionally biased stretch (polar residues) spans 163–177 (MTTTADGDGSRQPSA).

Belongs to the WrbA family. The cofactor is FMN.

The catalysed reaction is a quinone + NADH + H(+) = a quinol + NAD(+). It carries out the reaction a quinone + NADPH + H(+) = a quinol + NADP(+). In Brucella suis (strain ATCC 23445 / NCTC 10510), this protein is NAD(P)H dehydrogenase (quinone).